A 375-amino-acid chain; its full sequence is Erythronate-4-phosphate dehydrogenase (375 aa).

Substrate contacts are provided by Ser45 and Thr66. NAD(+) contacts are provided by Asp146 and Thr175. Residue Arg208 is part of the active site. Asp232 serves as a coordination point for NAD(+). Glu237 is an active-site residue. His254 acts as the Proton donor in catalysis. Residue Gly257 coordinates NAD(+). A substrate-binding site is contributed by Tyr258.

This sequence belongs to the D-isomer specific 2-hydroxyacid dehydrogenase family. PdxB subfamily. Homodimer.

The protein localises to the cytoplasm. It catalyses the reaction 4-phospho-D-erythronate + NAD(+) = (R)-3-hydroxy-2-oxo-4-phosphooxybutanoate + NADH + H(+). The protein operates within cofactor biosynthesis; pyridoxine 5'-phosphate biosynthesis; pyridoxine 5'-phosphate from D-erythrose 4-phosphate: step 2/5. Functionally, catalyzes the oxidation of erythronate-4-phosphate to 3-hydroxy-2-oxo-4-phosphonooxybutanoate. This Edwardsiella ictaluri (strain 93-146) protein is Erythronate-4-phosphate dehydrogenase.